The chain runs to 690 residues: Elongation factor G (690 aa).

The 276-residue stretch at 8 to 283 (EDYRNFGIMA…AVVDYLPSPL (276 aa)) folds into the tr-type G domain. GTP contacts are provided by residues 17 to 24 (AHIDAGKT), 81 to 85 (DTPGH), and 135 to 138 (NKMD).

It belongs to the TRAFAC class translation factor GTPase superfamily. Classic translation factor GTPase family. EF-G/EF-2 subfamily.

The protein localises to the cytoplasm. In terms of biological role, catalyzes the GTP-dependent ribosomal translocation step during translation elongation. During this step, the ribosome changes from the pre-translocational (PRE) to the post-translocational (POST) state as the newly formed A-site-bound peptidyl-tRNA and P-site-bound deacylated tRNA move to the P and E sites, respectively. Catalyzes the coordinated movement of the two tRNA molecules, the mRNA and conformational changes in the ribosome. The protein is Elongation factor G of Rhodopseudomonas palustris (strain ATCC BAA-98 / CGA009).